A 1406-amino-acid chain; its full sequence is DNA-directed RNA polymerase subunit beta' (1406 aa).

Residues Cys-72, Cys-74, Cys-87, and Cys-90 each contribute to the Zn(2+) site. Mg(2+)-binding residues include Asp-462, Asp-464, and Asp-466. The Zn(2+) site is built by Cys-816, Cys-891, Cys-898, and Cys-901.

Belongs to the RNA polymerase beta' chain family. The RNAP catalytic core consists of 2 alpha, 1 beta, 1 beta' and 1 omega subunit. When a sigma factor is associated with the core the holoenzyme is formed, which can initiate transcription. It depends on Mg(2+) as a cofactor. Zn(2+) is required as a cofactor.

The enzyme catalyses RNA(n) + a ribonucleoside 5'-triphosphate = RNA(n+1) + diphosphate. Functionally, DNA-dependent RNA polymerase catalyzes the transcription of DNA into RNA using the four ribonucleoside triphosphates as substrates. This is DNA-directed RNA polymerase subunit beta' from Psychrobacter arcticus (strain DSM 17307 / VKM B-2377 / 273-4).